Reading from the N-terminus, the 349-residue chain is Glycerol-3-phosphate dehydrogenase [NAD(+)], cytoplasmic (349 aa).

NAD(+) is bound at residue 10–15 (GSGNWG). Lys-120 provides a ligand contact to substrate. Ala-153 serves as a coordination point for NAD(+). Ser-154 carries the post-translational modification Phosphoserine. Lys-204 functions as the Proton acceptor in the catalytic mechanism. Position 269 (Arg-269) interacts with NAD(+). 269 to 270 (RN) lines the substrate pocket. An N6-succinyllysine modification is found at Lys-289. NAD(+)-binding residues include Lys-296 and Gln-298. Phosphotyrosine is present on Tyr-326.

Belongs to the NAD-dependent glycerol-3-phosphate dehydrogenase family. In terms of assembly, homodimer.

Its subcellular location is the cytoplasm. It carries out the reaction sn-glycerol 3-phosphate + NAD(+) = dihydroxyacetone phosphate + NADH + H(+). Its function is as follows. Has glycerol-3-phosphate dehydrogenase activity. The sequence is that of Glycerol-3-phosphate dehydrogenase [NAD(+)], cytoplasmic from Mus musculus (Mouse).